We begin with the raw amino-acid sequence, 401 residues long: Exodeoxyribonuclease 7 large subunit (401 aa).

The protein belongs to the XseA family. Heterooligomer composed of large and small subunits.

Its subcellular location is the cytoplasm. It catalyses the reaction Exonucleolytic cleavage in either 5'- to 3'- or 3'- to 5'-direction to yield nucleoside 5'-phosphates.. Bidirectionally degrades single-stranded DNA into large acid-insoluble oligonucleotides, which are then degraded further into small acid-soluble oligonucleotides. The protein is Exodeoxyribonuclease 7 large subunit of Clostridium botulinum (strain Loch Maree / Type A3).